A 1171-amino-acid chain; its full sequence is ATP-dependent helicase/deoxyribonuclease subunit B (1171 aa).

The 390-residue stretch at 1 to 390 folds into the UvrD-like helicase ATP-binding domain; that stretch reads MSLRFVIGRA…HPLVECIRSA (390 aa). 8-15 is a binding site for ATP; that stretch reads GRAGSGKS. Residues 281-587 enclose the UvrD-like helicase C-terminal domain; that stretch reads MEQPRFHSPA…QFANIPPSLD (307 aa). [4Fe-4S] cluster contacts are provided by Cys805, Cys1129, Cys1132, and Cys1138.

This sequence belongs to the helicase family. AddB/RexB type 1 subfamily. As to quaternary structure, heterodimer of AddA and AddB. It depends on Mg(2+) as a cofactor. [4Fe-4S] cluster is required as a cofactor.

Its function is as follows. The heterodimer acts as both an ATP-dependent DNA helicase and an ATP-dependent, dual-direction single-stranded exonuclease. Recognizes the chi site generating a DNA molecule suitable for the initiation of homologous recombination. The AddB subunit has 5' -&gt; 3' nuclease activity but not helicase activity. This Bacillus cereus (strain ZK / E33L) protein is ATP-dependent helicase/deoxyribonuclease subunit B.